The following is an 87-amino-acid chain: Omega-lycotoxin-Am1b (87 aa).

Positions 1–17 (MKLSIFFVLFFIAIAYC) are cleaved as a signal peptide. Residues 18–40 (QPEFLDDEEDEVEETLPVAEEGR) constitute a propeptide that is removed on maturation. 4 disulfide bridges follow: Cys44–Cys59, Cys51–Cys64, Cys58–Cys84, and Cys66–Cys82.

This sequence belongs to the neurotoxin omega-lctx family. In terms of tissue distribution, expressed by the venom gland.

The protein localises to the secreted. In terms of biological role, modulates Cav2.1/CACNA1A voltage-gated calcium channels (P/Q-type currents) in rat cerebellar Purkinje cells and hippocampal CA1-CA3 neurons. At saturating concentrations (&gt;10 nM) decelerates activation kinetics and slightly increases peak amplitude without affecting deactivation kinetics. In vivo, does not cause death when intravenously injected into mice. In rat models, through its activity on Cav2.1/CACNA1A, has an ameliorative effect on memory defects provoked by hyperstimulation of N-methyl-D-aspartate receptors (NMDARs) in the hippocampus. The polypeptide is Omega-lycotoxin-Am1b (Alopecosa marikovskyi (Wolf spider)).